Here is a 160-residue protein sequence, read N- to C-terminus: Large ribosomal subunit protein uL16 (160 aa).

The protein belongs to the universal ribosomal protein uL16 family. Part of the 50S ribosomal subunit.

Binds 23S rRNA and is also seen to make contacts with the A and possibly P site tRNAs. The chain is Large ribosomal subunit protein uL16 from Prochlorococcus marinus (strain MIT 9515).